Here is a 346-residue protein sequence, read N- to C-terminus: Hydroxycarboxylic acid receptor 1 (346 aa).

The Extracellular segment spans residues 1–21 (MYNGSCCRIEGDTISQVMPPL). Residue asparagine 3 is glycosylated (N-linked (GlcNAc...) asparagine). The chain crosses the membrane as a helical span at residues 22–42 (LIVAFVLGALGNGVALCGFCF). Residues 43-49 (HMKTWKP) lie on the Cytoplasmic side of the membrane. A helical transmembrane segment spans residues 50–70 (STVYLFNLAVADFLLMICLPF). Topologically, residues 71–89 (RTDYYLRRRHWAFGDIPCR) are extracellular. The cysteines at positions 88 and 165 are disulfide-linked. A helical transmembrane segment spans residues 90-110 (VGLFTLAMNRAGSIVFLTVVA). Residues 111-130 (ADRYFKVVHPHHAVNTISTR) lie on the Cytoplasmic side of the membrane. A helical membrane pass occupies residues 131–151 (VAAGIVCTLWALVILGTVYLL). Residues 152 to 182 (LENHLCVQETAVSCESFIMESANGWHDIMFQ) lie on the Extracellular side of the membrane. A helical membrane pass occupies residues 183–203 (LEFFMPLGIILFCSFKIVWSL). Over 204–220 (RRRQQLARQARMKKATR) the chain is Cytoplasmic. A helical membrane pass occupies residues 221–241 (FIMVVAIVFITCYLPSVSARL). Residues 242–261 (YFLWTVPSSACDPSVHGALH) are Extracellular-facing. The chain crosses the membrane as a helical span at residues 262–281 (ITLSFTYMNSMLDPLVYYFS). Topologically, residues 282 to 346 (SPSFPKFYNK…QWDPHIVEWH (65 aa)) are cytoplasmic.

The protein belongs to the G-protein coupled receptor 1 family. As to expression, expressed abundantly in brown and white fat. It also detectable at lower levels in liver, kidney, skeletal muscle, brain and pituitary. Not detected in frontal, temporal and occipital lobes of the cortex, basal forebrain, caudate nucleus, nucleus accumbens and hippocampus.

Its subcellular location is the cell membrane. Functionally, acts as a receptor for L-lactate and mediates its anti-lipolytic effect through a G(i)-protein-mediated pathway. In Homo sapiens (Human), this protein is Hydroxycarboxylic acid receptor 1 (HCAR1).